A 440-amino-acid chain; its full sequence is MHFLDENIQIKIDKFYKKNSLDKNRVIVAFSGGADSTALLLNLKYYLSNNVIAFYFAHFIRSDNEQNQEIEHVKGFCDLYNIALQIKKCDIDIKSESARLGVSIEELARKFRYIALENALKENGANYIALAHNENDQIETIIMRFFQGSFLDGLSGIPSVNRNIIRPLLEVSRLEIENFLSLNNIGFFVDSTNAQNLYLRNRVRNNLLPAIKKVFKGYEKCLKRISEFSKEFADYFGKDEFFPVEKGKYYYSFDLKTFLDFPKYLVFRLIFKILNSEGIAAKVSYKALNEAFKVEINRKKNNVLLKTNDFFLEKRHNKINLIFKRDEKFYKPFDFILEVGKWHSLSLGKILLKYLECNAASVSRLKCCSYEFRYKFFKDRLKAKKFFSKFIRCNPAYLMLLALDNRLIGIIDLNTLNLVWSEKSILKKINISLIGGLLKE.

Ser-31–Ser-36 provides a ligand contact to ATP.

The protein belongs to the tRNA(Ile)-lysidine synthase family.

The protein localises to the cytoplasm. The catalysed reaction is cytidine(34) in tRNA(Ile2) + L-lysine + ATP = lysidine(34) in tRNA(Ile2) + AMP + diphosphate + H(+). Ligates lysine onto the cytidine present at position 34 of the AUA codon-specific tRNA(Ile) that contains the anticodon CAU, in an ATP-dependent manner. Cytidine is converted to lysidine, thus changing the amino acid specificity of the tRNA from methionine to isoleucine. In Borreliella burgdorferi (strain ATCC 35210 / DSM 4680 / CIP 102532 / B31) (Borrelia burgdorferi), this protein is tRNA(Ile)-lysidine synthase.